A 274-amino-acid chain; its full sequence is MGVRKLKPVTNGTRHAILYDFAEITKSEPEKSLVEPLKKHAGRNNQGRITVRHRGGGHKRLYRIIDFKRDKWGIPAKVAAIEYDPNRSARIALLHYLDGEKRYIIWPEGLKVGDYIMAGPDAEIKVGNALPLENIPVGTLVHNIELTPGKGGQLVRAAGMSAQILGREGDYVQIRLPSGELRLVYKKCMATIGAVGLAEHELLELGKAGRSRWLGIRPTVRGTAMNPADHPHGGGEGRTFGKHPVSPWGLPTKGYKTRRGAKYSDKFIIKRRGK.

Positions Arg-221–Gly-254 are disordered.

It belongs to the universal ribosomal protein uL2 family. As to quaternary structure, part of the 50S ribosomal subunit. Forms a bridge to the 30S subunit in the 70S ribosome.

Functionally, one of the primary rRNA binding proteins. Required for association of the 30S and 50S subunits to form the 70S ribosome, for tRNA binding and peptide bond formation. It has been suggested to have peptidyltransferase activity; this is somewhat controversial. Makes several contacts with the 16S rRNA in the 70S ribosome. The polypeptide is Large ribosomal subunit protein uL2 (Sulfurihydrogenibium sp. (strain YO3AOP1)).